Consider the following 312-residue polypeptide: Zinc transporter ZitB (312 aa).

6 helical membrane-spanning segments follow: residues 16–36, 40–60, 81–101, 117–137, 153–173, and 177–197; these read LLIA…GGWL, LALL…FIAL, LTTL…ILIV, TPML…FWIL, LHVL…IVIL, and WTPI…RNAW.

Belongs to the cation diffusion facilitator (CDF) transporter (TC 2.A.4) family. SLC30A subfamily.

The protein resides in the cell inner membrane. Involved in zinc efflux across the cytoplasmic membrane, thus reducing zinc accumulation in the cytoplasm and rendering bacteria more resistant to zinc. It may contribute to zinc homeostasis at low concentrations of zinc. This Yersinia pseudotuberculosis serotype I (strain IP32953) protein is Zinc transporter ZitB.